A 132-amino-acid polypeptide reads, in one-letter code: Small ribosomal subunit protein uS8 (132 aa).

Belongs to the universal ribosomal protein uS8 family. In terms of assembly, part of the 30S ribosomal subunit. Contacts proteins S5 and S12.

Functionally, one of the primary rRNA binding proteins, it binds directly to 16S rRNA central domain where it helps coordinate assembly of the platform of the 30S subunit. This is Small ribosomal subunit protein uS8 from Thermoanaerobacter pseudethanolicus (strain ATCC 33223 / 39E) (Clostridium thermohydrosulfuricum).